A 152-amino-acid polypeptide reads, in one-letter code: Transcriptional repressor NrdR (152 aa).

A zinc finger lies at 3–34 (CPFCSTEETKVIDSRLVSEGYQVRRRRECTNC). The ATP-cone domain maps to 49–139 (PKIVKTDGYR…VYLSFENINE (91 aa)).

The protein belongs to the NrdR family. The cofactor is Zn(2+).

Functionally, negatively regulates transcription of bacterial ribonucleotide reductase nrd genes and operons by binding to NrdR-boxes. The chain is Transcriptional repressor NrdR from Actinobacillus succinogenes (strain ATCC 55618 / DSM 22257 / CCUG 43843 / 130Z).